Consider the following 259-residue polypeptide: Kynurenine formamidase (259 aa).

The short motif at 34 to 38 (HGGAW) is the HGGXW element. Serine 103 acts as the Nucleophile in catalysis. Active-site residues include aspartate 196 and histidine 228.

It belongs to the kynurenine formamidase family. Homodimer.

The catalysed reaction is N-formyl-L-kynurenine + H2O = L-kynurenine + formate + H(+). Its pathway is amino-acid degradation; L-tryptophan degradation via kynurenine pathway; L-kynurenine from L-tryptophan: step 2/2. Its function is as follows. Catalyzes the hydrolysis of N-formyl-L-kynurenine to L-kynurenine, the second step in the kynurenine pathway of tryptophan degradation. Kynurenine may be further oxidized to nicotinic acid, NAD(H) and NADP(H). Required for elimination of toxic metabolites. This Meyerozyma guilliermondii (strain ATCC 6260 / CBS 566 / DSM 6381 / JCM 1539 / NBRC 10279 / NRRL Y-324) (Yeast) protein is Kynurenine formamidase.